The chain runs to 366 residues: Carbamoyl phosphate synthase small chain (366 aa).

Residues 1–168 (MYGILVLEDG…KETVIYNAED (168 aa)) form a CPSase region. L-glutamine contacts are provided by Ser-45, Gly-220, and Gly-222. Positions 172–363 (RCVLIDCGVK…VELGIKFKAE (192 aa)) constitute a Glutamine amidotransferase type-1 domain. The active-site Nucleophile is Cys-247. Leu-248, Gln-251, Asn-289, Gly-291, and Phe-292 together coordinate L-glutamine. Residues His-336 and Glu-338 contribute to the active site.

Belongs to the CarA family. In terms of assembly, composed of two chains; the small (or glutamine) chain promotes the hydrolysis of glutamine to ammonia, which is used by the large (or ammonia) chain to synthesize carbamoyl phosphate. Tetramer of heterodimers (alpha,beta)4.

The catalysed reaction is hydrogencarbonate + L-glutamine + 2 ATP + H2O = carbamoyl phosphate + L-glutamate + 2 ADP + phosphate + 2 H(+). The enzyme catalyses L-glutamine + H2O = L-glutamate + NH4(+). Its pathway is amino-acid biosynthesis; L-arginine biosynthesis; carbamoyl phosphate from bicarbonate: step 1/1. The protein operates within pyrimidine metabolism; UMP biosynthesis via de novo pathway; (S)-dihydroorotate from bicarbonate: step 1/3. Small subunit of the glutamine-dependent carbamoyl phosphate synthetase (CPSase). CPSase catalyzes the formation of carbamoyl phosphate from the ammonia moiety of glutamine, carbonate, and phosphate donated by ATP, constituting the first step of 2 biosynthetic pathways, one leading to arginine and/or urea and the other to pyrimidine nucleotides. The small subunit (glutamine amidotransferase) binds and cleaves glutamine to supply the large subunit with the substrate ammonia. The sequence is that of Carbamoyl phosphate synthase small chain from Methanococcus maripaludis (strain C5 / ATCC BAA-1333).